Here is a 790-residue protein sequence, read N- to C-terminus: MASEGEGVLKKEGLPEKLRILPLRNMVLYPDLVLPLHVTRAGYRRLADEVYRENGLLAVVAQRNEEAEEASPADIYQVGTVGSIIKLLKQADGTYQIIVGASEKVRLRNISQAGDYLEAEVEAVPEDRSTSPEIEALALNLRMGFQKFVSLASLPLDLANFALNAERPMQLVYAVASHLALSVVERQSILEMPETKAALEHVTFYMTRQLEKLELAQRIQDRVKSVMDKRQRDYYLREQLQAIRKELGEGEDTSEEVHELAARLRDLEMPAEARGAAEKEIERLGRMSPSAPEYHVSRNYLDWLLEMPWSVSTEDRIDVRQAAVILDEDHFDLEKVKRRILEYLAVLQLKKDLKGPILCFVGPPGVGKTSLGQSIARTLGRKFLRISLGGVRDEAEIRGHRRTYVGALPGRIVQGLRRVGSNNPVFMLDEIDKIGMDFRGDPSSALLEVLDPEQNFSFSDHYLGVPFDLSRVMFIATGNLLDTVPAALKDRMEVIEIPGYTAEEKLEIARKFLVERETANHGLTSDHIRIGEDAILEIIRSYTREAGVRSLQRNLASVCRNTAKAIAEGASGPIHIDASGIPEILGPVQFLPETATRSWGCGIATGLAWTPSGGQLIFIETLRTHGNGKLLLTGQLGEVMKESATAALTFVRAHAADLEIEGEEFDRSDIHVHVPAGATPKDGPSAGAPMVVALASLMTGREVRKDVAMTGEITLRGDILPVGGIKEKVLAARRAGVKEIMIPHANMKDLADIPDHLRRDMTIHELQTISDVLQLALLPSPRQGGSSPRS.

The Lon N-terminal domain occupies 18 to 210; it reads LRILPLRNMV…HVTFYMTRQL (193 aa). An ATP-binding site is contributed by 362-369; that stretch reads GPPGVGKT. Positions 598–779 constitute a Lon proteolytic domain; that stretch reads SWGCGIATGL…SDVLQLALLP (182 aa). Active-site residues include Ser-685 and Lys-728.

This sequence belongs to the peptidase S16 family. As to quaternary structure, homohexamer. Organized in a ring with a central cavity.

The protein localises to the cytoplasm. It catalyses the reaction Hydrolysis of proteins in presence of ATP.. ATP-dependent serine protease that mediates the selective degradation of mutant and abnormal proteins as well as certain short-lived regulatory proteins. Required for cellular homeostasis and for survival from DNA damage and developmental changes induced by stress. Degrades polypeptides processively to yield small peptide fragments that are 5 to 10 amino acids long. Binds to DNA in a double-stranded, site-specific manner. The protein is Lon protease 2 of Syntrophobacter fumaroxidans (strain DSM 10017 / MPOB).